The sequence spans 389 residues: tRNA-specific 2-thiouridylase MnmA (389 aa).

ATP is bound by residues 35-42 (GMSGGVDS) and Met-61. Residues 121–123 (NPD) are interaction with target base in tRNA. Cys-126 functions as the Nucleophile in the catalytic mechanism. Cysteines 126 and 223 form a disulfide. Gly-151 lines the ATP pocket. Positions 173-175 (KDQ) are interaction with tRNA. Cys-223 acts as the Cysteine persulfide intermediate in catalysis. The tract at residues 335–336 (RY) is interaction with tRNA.

This sequence belongs to the MnmA/TRMU family.

Its subcellular location is the cytoplasm. The enzyme catalyses S-sulfanyl-L-cysteinyl-[protein] + uridine(34) in tRNA + AH2 + ATP = 2-thiouridine(34) in tRNA + L-cysteinyl-[protein] + A + AMP + diphosphate + H(+). In terms of biological role, catalyzes the 2-thiolation of uridine at the wobble position (U34) of tRNA, leading to the formation of s(2)U34. This chain is tRNA-specific 2-thiouridylase MnmA, found in Mannheimia succiniciproducens (strain KCTC 0769BP / MBEL55E).